The sequence spans 911 residues: Isoleucine--tRNA ligase (911 aa).

The short motif at 57–67 is the 'HIGH' region element; the sequence is PYANGHIHIGH. Glutamate 564 is a binding site for L-isoleucyl-5'-AMP. A 'KMSKS' region motif is present at residues 605-609; the sequence is KMSKS. Residue lysine 608 participates in ATP binding. The Zn(2+) site is built by cysteine 887, cysteine 890, cysteine 902, and cysteine 905.

Belongs to the class-I aminoacyl-tRNA synthetase family. IleS type 1 subfamily. As to quaternary structure, monomer. Zn(2+) serves as cofactor.

It localises to the cytoplasm. The enzyme catalyses tRNA(Ile) + L-isoleucine + ATP = L-isoleucyl-tRNA(Ile) + AMP + diphosphate. Catalyzes the attachment of isoleucine to tRNA(Ile). As IleRS can inadvertently accommodate and process structurally similar amino acids such as valine, to avoid such errors it has two additional distinct tRNA(Ile)-dependent editing activities. One activity is designated as 'pretransfer' editing and involves the hydrolysis of activated Val-AMP. The other activity is designated 'posttransfer' editing and involves deacylation of mischarged Val-tRNA(Ile). This is Isoleucine--tRNA ligase from Nautilia profundicola (strain ATCC BAA-1463 / DSM 18972 / AmH).